Reading from the N-terminus, the 103-residue chain is Large ribosomal subunit protein bL21 (103 aa).

This sequence belongs to the bacterial ribosomal protein bL21 family. In terms of assembly, part of the 50S ribosomal subunit. Contacts protein L20.

Its function is as follows. This protein binds to 23S rRNA in the presence of protein L20. This is Large ribosomal subunit protein bL21 from Acetivibrio thermocellus (strain ATCC 27405 / DSM 1237 / JCM 9322 / NBRC 103400 / NCIMB 10682 / NRRL B-4536 / VPI 7372) (Clostridium thermocellum).